The sequence spans 224 residues: UPF0173 metal-dependent hydrolase EAT1b_0495 (224 aa).

Belongs to the UPF0173 family.

This chain is UPF0173 metal-dependent hydrolase EAT1b_0495, found in Exiguobacterium sp. (strain ATCC BAA-1283 / AT1b).